The sequence spans 233 residues: Glucosamine-6-phosphate deaminase (233 aa).

D62 serves as the catalytic Proton acceptor; for enolization step. Catalysis depends on N128, which acts as the For ring-opening step. H130 serves as the catalytic Proton acceptor; for ring-opening step. E135 (for ring-opening step) is an active-site residue.

The protein belongs to the glucosamine/galactosamine-6-phosphate isomerase family. NagB subfamily.

It catalyses the reaction alpha-D-glucosamine 6-phosphate + H2O = beta-D-fructose 6-phosphate + NH4(+). Its pathway is amino-sugar metabolism; N-acetylneuraminate degradation; D-fructose 6-phosphate from N-acetylneuraminate: step 5/5. In terms of biological role, catalyzes the reversible isomerization-deamination of glucosamine 6-phosphate (GlcN6P) to form fructose 6-phosphate (Fru6P) and ammonium ion. The sequence is that of Glucosamine-6-phosphate deaminase from Leuconostoc citreum (strain KM20).